Reading from the N-terminus, the 425-residue chain is Histone-binding protein RBBP7 (425 aa).

A2 is subject to N-acetylalanine. Residue S3 is modified to Phosphoserine. K4 carries the post-translational modification N6-acetyllysine; alternate. K4 is covalently cross-linked (Glycyl lysine isopeptide (Lys-Gly) (interchain with G-Cter in SUMO2); alternate). K4 is covalently cross-linked (Glycyl lysine isopeptide (Lys-Gly) (interchain with G-Cter in ubiquitin); alternate). Phosphothreonine is present on T10. 7 WD repeats span residues 47–122 (QWLP…KINH), 128–173 (RARY…LRLR), 181–217 (GLSWNSNLSGHLLSASDDHTVCLWDINAGPKEGKIVD), 228–269 (VVED…HLVD), 275–312 (VNCLSFNPYSEFILATGSADKTVALWDLRNLKLKLHTF), 318–369 (EIFQ…LFIH), and 376–403 (ISDFSWNPNEPWVICSVSEDNIMQIWQM). Position 95 is a phosphoserine (S95). K101 is covalently cross-linked (Glycyl lysine isopeptide (Lys-Gly) (interchain with G-Cter in SUMO2)). K119 bears the N6-acetyllysine mark. K155 participates in a covalent cross-link: Glycyl lysine isopeptide (Lys-Gly) (interchain with G-Cter in SUMO2). Residue K159 is modified to N6-acetyllysine; alternate. K159 participates in a covalent cross-link: Glycyl lysine isopeptide (Lys-Gly) (interchain with G-Cter in SUMO2); alternate. S354 is modified (phosphoserine).

The protein belongs to the WD repeat RBAP46/RBAP48/MSI1 family. As to quaternary structure, binds directly to helix 1 of the histone fold of histone H4, a region that is not accessible when H4 is in chromatin. Subunit of the type B histone acetyltransferase (HAT) complex, composed of RBBP7 and HAT1. Subunit of the core histone deacetylase (HDAC) complex, which is composed of HDAC1, HDAC2, RBBP4 and RBBP7. The core HDAC complex associates with SIN3A, ARID4B/SAP180, SAP18, SAP30, SAP130, SUDS3/SAP45 and possibly ARID4A/RBP1 and ING1 to form the SIN3 HDAC complex. Component of the nucleosome remodeling and deacetylase (NuRD) repressor complex, composed of core proteins MTA1, MTA2, MTA3, RBBP4, RBBP7, HDAC1, HDAC2, MBD2, MBD3, and peripherally associated proteins CDK2AP1, CDK2AP2, GATAD2A, GATAD2B, CHD3, CHD4 and CHD5. The exact stoichiometry of the NuRD complex is unknown, and some subunits such as MBD2 and MBD3, GATAD2A and GATAD2B, and CHD3, CHD4 and CHD5 define mutually exclusive NuRD complexes. The NuRD complex may interact with MBD3L1. The NuRD complex may interact with MBD3L2. Subunit of the PRC2/EED-EZH2 complex, which is composed of at least EED, EZH2, RBBP4, RBBP7 and SUZ12. The PRC2/EED-EZH2 complex may also associate with HDAC1. Component of the NURF-1 ISWI chromatin remodeling complex (also called the nucleosome-remodeling factor (NURF) complex) at least composed of SMARCA1, BPTF, RBBP4 and RBBP7. Within the complex interacts with SMARCA1. Component of the BPFT-SMARCA1 complex at least composed of SMARCA1, BPFT, RBBP4 and RBBP7; the complex is catalytically inactive and does not remodel chromatin. Within the complex interacts with SMARCA1. Interacts with BRCA1. Interacts with CDK2AP1. Interacts with CENPA. Interacts with CHD3. Interacts with CHD4. Interacts with CREBBP, and this interaction may be enhanced by the binding of phosphorylated CREB1 to CREBBP. Interacts with HDAC7. Interacts with MTA1. Interacts with PWWP2B. Interacts with RB1 (via viral protein-binding domain). Interacts with SUV39H1. In terms of tissue distribution, higher levels in brain, thymus, lung, spleen, kidney, testis, and ovary/uterus; lower levels in heart, liver, and muscle.

It is found in the nucleus. Its function is as follows. Core histone-binding subunit that may target chromatin remodeling factors, histone acetyltransferases and histone deacetylases to their histone substrates in a manner that is regulated by nucleosomal DNA. Component of several complexes which regulate chromatin metabolism. These include the type B histone acetyltransferase (HAT) complex, which is required for chromatin assembly following DNA replication; the core histone deacetylase (HDAC) complex, which promotes histone deacetylation and consequent transcriptional repression; the nucleosome remodeling and histone deacetylase complex (the NuRD complex), which promotes transcriptional repression by histone deacetylation and nucleosome remodeling; and the PRC2/EED-EZH2 complex, which promotes repression of homeotic genes during development; and the NURF (nucleosome remodeling factor) complex. The chain is Histone-binding protein RBBP7 (Rbbp7) from Mus musculus (Mouse).